A 689-amino-acid polypeptide reads, in one-letter code: Centrosomal protein of 78 kDa (689 aa).

A phosphoserine mark is found at Ser-325 and Ser-327. 3 disordered regions span residues 432–451 (SSEV…VPEK), 563–589 (PQMT…EPKQ), and 614–689 (DSFP…TESH). A coiled-coil region spans residues 450–505 (EKTSIEQEALQEKLEECLKQLKEERVIRLKVDKRVSELEHENAQLRNINFSLSEAL). Composition is skewed to basic and acidic residues over residues 573–587 (PKEE…KPEP) and 666–689 (QRKE…TESH).

The protein belongs to the CEP78 family. As to quaternary structure, interacts with PLK4. Interacts with FAM161A. Interacts with IFT20; regulating IFT20 stability and localization. Interacts with TTC21A; regulating TTC21A stability and localization. Interacts with USP16; promoting USP16-dependent deubiquitination of tektins. Interacts with DCAF1/VPRBP; promoting localization of the EDVP complex to centrosomes. Interacts with CEP350; promoting CEP78 localization to centrosome and centriole. In terms of tissue distribution, widely expressed. Expressed in different retinal cell types with higher expression in cone compared to rod cells (at protein level).

The protein resides in the cytoplasm. Its subcellular location is the cytoskeleton. It localises to the microtubule organizing center. It is found in the centrosome. The protein localises to the centriole. The protein resides in the cilium basal body. Centriole wall protein that localizes to mature centrioles and regulates centriole and cilia biogenesis. Involved in centrosome duplication: required for efficient PLK4 centrosomal localization and PLK4-induced overduplication of centrioles. Involved in cilium biogenesis and controls cilium length. Acts as a regulator of protein stability by preventing ubiquitination of centrosomal proteins, such as CCP110 and tektins. Associates with the EDVP complex, preventing ubiquitination and degradation of CCP110. Promotes deubiquitination of tektin proteins (TEKT1, TEKT2, TEK3, TEKT4 and TEKT5) via its interaction with USP16. The chain is Centrosomal protein of 78 kDa from Homo sapiens (Human).